Here is a 92-residue protein sequence, read N- to C-terminus: Small ribosomal subunit protein uS19 (92 aa).

The protein belongs to the universal ribosomal protein uS19 family.

Its function is as follows. Protein S19 forms a complex with S13 that binds strongly to the 16S ribosomal RNA. This is Small ribosomal subunit protein uS19 from Sulfurovum sp. (strain NBC37-1).